Reading from the N-terminus, the 371-residue chain is Queuine tRNA-ribosyltransferase (371 aa).

Catalysis depends on Asp90, which acts as the Proton acceptor. Residues Asp90–Phe94, Asp144, Gln188, and Gly215 contribute to the substrate site. Residues Gly246–Asp252 are RNA binding. The active-site Nucleophile is the Asp265. The RNA binding; important for wobble base 34 recognition stretch occupies residues Thr270–Arg274. Residues Cys303, Cys305, Cys308, and His334 each contribute to the Zn(2+) site.

It belongs to the queuine tRNA-ribosyltransferase family. As to quaternary structure, homodimer. Within each dimer, one monomer is responsible for RNA recognition and catalysis, while the other monomer binds to the replacement base PreQ1. It depends on Zn(2+) as a cofactor.

The enzyme catalyses 7-aminomethyl-7-carbaguanine + guanosine(34) in tRNA = 7-aminomethyl-7-carbaguanosine(34) in tRNA + guanine. Its pathway is tRNA modification; tRNA-queuosine biosynthesis. Catalyzes the base-exchange of a guanine (G) residue with the queuine precursor 7-aminomethyl-7-deazaguanine (PreQ1) at position 34 (anticodon wobble position) in tRNAs with GU(N) anticodons (tRNA-Asp, -Asn, -His and -Tyr). Catalysis occurs through a double-displacement mechanism. The nucleophile active site attacks the C1' of nucleotide 34 to detach the guanine base from the RNA, forming a covalent enzyme-RNA intermediate. The proton acceptor active site deprotonates the incoming PreQ1, allowing a nucleophilic attack on the C1' of the ribose to form the product. After dissociation, two additional enzymatic reactions on the tRNA convert PreQ1 to queuine (Q), resulting in the hypermodified nucleoside queuosine (7-(((4,5-cis-dihydroxy-2-cyclopenten-1-yl)amino)methyl)-7-deazaguanosine). The chain is Queuine tRNA-ribosyltransferase from Chromobacterium violaceum (strain ATCC 12472 / DSM 30191 / JCM 1249 / CCUG 213 / NBRC 12614 / NCIMB 9131 / NCTC 9757 / MK).